Here is a 526-residue protein sequence, read N- to C-terminus: Glucose-6-phosphate 1-dehydrogenase (526 aa).

Residues 50–57 (GASGDLAK), R84, and K184 each bind NADP(+). Residues K184, 214-218 (HYLGK), E252, and D271 contribute to the D-glucose 6-phosphate site. H276 (proton acceptor) is an active-site residue. Position 370 (R370) interacts with NADP(+). D-glucose 6-phosphate-binding residues include K373 and R378. NADP(+) is bound by residues K379, R383, and R406. Residue Q408 coordinates D-glucose 6-phosphate. NADP(+)-binding positions include 414–416 (YFK), 434–436 (DLT), R500, Y516, and W522.

This sequence belongs to the glucose-6-phosphate dehydrogenase family.

Its subcellular location is the cytoplasm. The protein localises to the cytosol. The enzyme catalyses D-glucose 6-phosphate + NADP(+) = 6-phospho-D-glucono-1,5-lactone + NADPH + H(+). The protein operates within carbohydrate degradation; pentose phosphate pathway; D-ribulose 5-phosphate from D-glucose 6-phosphate (oxidative stage): step 1/3. Cytosolic glucose-6-phosphate dehydrogenase that catalyzes the first and rate-limiting step of the oxidative branch within the pentose phosphate pathway/shunt, an alternative route to glycolysis for the dissimilation of carbohydrates and a major source of reducing power and metabolic intermediates for fatty acid and nucleic acid biosynthetic processes. The protein is Glucose-6-phosphate 1-dehydrogenase (ZW) of Ceratitis capitata (Mediterranean fruit fly).